Consider the following 145-residue polypeptide: Actin-related protein 4A (145 aa).

The disordered stretch occupies residues 47-66 (IDDAANTTEDAKESDKEKGK). Residues 55–64 (EDAKESDKEK) show a composition bias toward basic and acidic residues.

This sequence belongs to the actin family. ARP4 subfamily. As to expression, expressed in roots, leaves and flowers.

The polypeptide is Actin-related protein 4A (ARP4A) (Arabidopsis thaliana (Mouse-ear cress)).